We begin with the raw amino-acid sequence, 470 residues long: Sugar transporter ERD6-like 8 (470 aa).

Over residues 1-16 (METRKDDMEKRNDKSE) the composition is skewed to basic and acidic residues. A disordered region spans residues 1 to 24 (METRKDDMEKRNDKSEPLLLPENG). The next 12 helical transmembrane spans lie at 33-53 (WMVY…GTCV), 73-93 (QFSV…ITSG), 110-130 (VISA…PLDF), 133-153 (FLTG…IAEI), 164-184 (TLNQ…GAVV), 188-208 (TLAL…WFIP), 270-290 (FVIV…NGVI), 307-327 (GSIL…TLLI), 335-355 (LLMA…NSFL), 373-393 (GVLV…WVIM), 409-429 (VTVV…FLMI), and 434-454 (GTFY…AKLV).

It belongs to the major facilitator superfamily. Sugar transporter (TC 2.A.1.1) family.

It localises to the membrane. Functionally, sugar transporter. This is Sugar transporter ERD6-like 8 from Arabidopsis thaliana (Mouse-ear cress).